The sequence spans 483 residues: Serine hydroxymethyltransferase, cytosolic (483 aa).

Residue Lys-257 is modified to N6-(pyridoxal phosphate)lysine.

It belongs to the SHMT family. Homotetramer. Identified in complex with ABRAXAS2 and the other subunits of the BRISC complex, at least composed of ABRAXAS2, BRCC3/BRCC36, BABAM2 and BABAM1/NBA1. The cofactor is pyridoxal 5'-phosphate.

The protein localises to the cytoplasm. The enzyme catalyses (6R)-5,10-methylene-5,6,7,8-tetrahydrofolate + glycine + H2O = (6S)-5,6,7,8-tetrahydrofolate + L-serine. Its pathway is one-carbon metabolism; tetrahydrofolate interconversion. Interconversion of serine and glycine. The polypeptide is Serine hydroxymethyltransferase, cytosolic (SHMT1) (Pongo abelii (Sumatran orangutan)).